Consider the following 1222-residue polypeptide: ATP-dependent helicase/nuclease subunit A (1222 aa).

The UvrD-like helicase ATP-binding domain maps to 39–495; the sequence is QKRTAQQIEA…ILLKENFRSQ (457 aa). Residue 60–67 coordinates ATP; the sequence is ASAGSGKT. The region spanning 524 to 810 is the UvrD-like helicase C-terminal domain; sequence QLIAGSHAQT…NLMTIHKSKG (287 aa).

Belongs to the helicase family. AddA subfamily. As to quaternary structure, heterodimer of AddA and AddB/RexB. Mg(2+) serves as cofactor.

The enzyme catalyses Couples ATP hydrolysis with the unwinding of duplex DNA by translocating in the 3'-5' direction.. It carries out the reaction ATP + H2O = ADP + phosphate + H(+). Functionally, the heterodimer acts as both an ATP-dependent DNA helicase and an ATP-dependent, dual-direction single-stranded exonuclease. Recognizes the chi site generating a DNA molecule suitable for the initiation of homologous recombination. The AddA nuclease domain is required for chi fragment generation; this subunit has the helicase and 3' -&gt; 5' nuclease activities. This Streptococcus pyogenes serotype M12 (strain MGAS2096) protein is ATP-dependent helicase/nuclease subunit A.